The following is a 358-amino-acid chain: Phosphoserine aminotransferase (358 aa).

Arginine 41 contributes to the L-glutamate binding site. Residues alanine 75–arginine 76, tryptophan 101, threonine 150, aspartate 170, and glutamine 193 contribute to the pyridoxal 5'-phosphate site. Lysine 194 bears the N6-(pyridoxal phosphate)lysine mark. Position 235 to 236 (asparagine 235 to threonine 236) interacts with pyridoxal 5'-phosphate.

This sequence belongs to the class-V pyridoxal-phosphate-dependent aminotransferase family. SerC subfamily. As to quaternary structure, homodimer. It depends on pyridoxal 5'-phosphate as a cofactor.

It is found in the cytoplasm. The catalysed reaction is O-phospho-L-serine + 2-oxoglutarate = 3-phosphooxypyruvate + L-glutamate. The enzyme catalyses 4-(phosphooxy)-L-threonine + 2-oxoglutarate = (R)-3-hydroxy-2-oxo-4-phosphooxybutanoate + L-glutamate. The protein operates within amino-acid biosynthesis; L-serine biosynthesis; L-serine from 3-phospho-D-glycerate: step 2/3. Its pathway is cofactor biosynthesis; pyridoxine 5'-phosphate biosynthesis; pyridoxine 5'-phosphate from D-erythrose 4-phosphate: step 3/5. Functionally, catalyzes the reversible conversion of 3-phosphohydroxypyruvate to phosphoserine and of 3-hydroxy-2-oxo-4-phosphonooxybutanoate to phosphohydroxythreonine. This chain is Phosphoserine aminotransferase, found in Histophilus somni (strain 129Pt) (Haemophilus somnus).